Consider the following 1011-residue polypeptide: Antigenic heat-stable 120 kDa protein (1011 aa).

Disordered regions lie at residues 1-37 (DTSEFDPLANKEYTEEQKQTEEQEQKEFLSQTTTPAL), 54-73 (TPSMSALSGNISPDSQTSDP), and 348-396 (GQSK…PQSQ). Residues 12–27 (EYTEEQKQTEEQEQKE) are compositionally biased toward basic and acidic residues. Polar residues-rich tracts occupy residues 348–373 (GQSKEQPLITPQQTTSSSVEPPQYKQ) and 380–396 (PTNQPLQPETSQMPQSQ).

The protein resides in the cytoplasm. This chain is Antigenic heat-stable 120 kDa protein (sca4), found in Rickettsia sibirica subsp. mongolitimonae (Rickettsia mongolotimonae).